The following is a 625-amino-acid chain: Thrombopoietin receptor (625 aa).

The first 25 residues, 1–25, serve as a signal peptide directing secretion; it reads MPSWALFMVTSCLLLALPNQAQVTS. The Extracellular portion of the chain corresponds to 26-482; it reads QDVFLLALGT…RVSTGSETAW (457 aa). The N-linked (GlcNAc...) asparagine glycan is linked to asparagine 117. Fibronectin type-III domains lie at 178–270 and 383–479; these read NATA…PVTV and PTPS…TGSE. The short motif at 465-469 is the WSXWS motif element; the sequence is WSAWS. A helical transmembrane segment spans residues 483 to 504; sequence ITLVTALLLVLSLSALLGLLLL. At 505 to 625 the chain is on the cytoplasmic side; that stretch reads KWQFPAHYRR…YLPLSYWQQP (121 aa). The Box 1 motif motif lies at 519 to 527; that stretch reads LWPSLPDLH. Residues lysine 544 and lysine 564 each participate in a glycyl lysine isopeptide (Lys-Gly) (interchain with G-Cter in ubiquitin) cross-link. Residues tyrosine 616 and tyrosine 621 each carry the phosphotyrosine modification.

This sequence belongs to the type I cytokine receptor family. Type 1 subfamily. In terms of assembly, homodimer. Interacts with ATXN2L. Interacts with JAK2 and TYK2; these interactions increase MPL localization to the cell membrane. Interacts with THPO. Interacts with SHIP/INPP5D. Interacts with kinases BTK and SYK. Ubiquitination at Lys-544 and Lys-564 targets MPL for degradation by both the lysosomal and proteasomal pathways. The E3 ubiquitin-protein ligase CBL significantly contributes to this ubiquitination.

It is found in the cell membrane. It localises to the golgi apparatus. Its subcellular location is the cell surface. In terms of biological role, receptor for thrombopoietin that regulates hematopoietic stem cell renewal, megakaryocyte differentiation, and platelet formation. Upon activation by THPO, induces rapid tyrosine phosphorylation and activation of JAK2, providing docking sites for many signaling proteins such as STAT5, SHIP/INPP5D, GRB2, SOS1 and PI3K. In turn, These signaling cascades lead to the proliferation, survival, and differentiation of megakaryocytes, ultimately leading to increased platelet production. Its function is as follows. Acts as an inhibitor of thrombopoietin signaling by promoting protein down-regulation of full-length isoform Mpl-fl. In Mus musculus (Mouse), this protein is Thrombopoietin receptor (Mpl).